We begin with the raw amino-acid sequence, 321 residues long: Photosystem II assembly factor Ycf39 (321 aa).

Belongs to the NmrA-type oxidoreductase family. Ycf39 subfamily.

The protein resides in the plastid. It is found in the cyanelle. Involved in assembly of photosystem II. This chain is Photosystem II assembly factor Ycf39 (ycf39), found in Cyanophora paradoxa.